Reading from the N-terminus, the 140-residue chain is Organic hydroperoxide resistance protein-like (140 aa).

It belongs to the OsmC/Ohr family.

The polypeptide is Organic hydroperoxide resistance protein-like (Mycoplasma genitalium (strain ATCC 33530 / DSM 19775 / NCTC 10195 / G37) (Mycoplasmoides genitalium)).